The sequence spans 304 residues: Putative S-adenosyl-L-methionine-dependent methyltransferase MAV_4444 (304 aa).

S-adenosyl-L-methionine contacts are provided by residues Asp130 and 159–160 (DL).

It belongs to the UPF0677 family.

Functionally, exhibits S-adenosyl-L-methionine-dependent methyltransferase activity. This is Putative S-adenosyl-L-methionine-dependent methyltransferase MAV_4444 from Mycobacterium avium (strain 104).